We begin with the raw amino-acid sequence, 426 residues long: Eukaryotic translation initiation factor 3 subunit M (426 aa).

A PCI domain is found at 179–350 (DDEDSYRYLI…KVFLVHRTTY (172 aa)). The segment covering 385 to 401 (DVEGQREREQQELERKL) has biased composition (basic and acidic residues). Positions 385–426 (DVEGQREREQQELERKLAGAGMGGGPGGDRRRQQKPRTDEDD) are disordered.

This sequence belongs to the eIF-3 subunit M family. In terms of assembly, component of the eukaryotic translation initiation factor 3 (eIF-3) complex.

It is found in the cytoplasm. Component of the eukaryotic translation initiation factor 3 (eIF-3) complex, which is involved in protein synthesis of a specialized repertoire of mRNAs and, together with other initiation factors, stimulates binding of mRNA and methionyl-tRNAi to the 40S ribosome. The eIF-3 complex specifically targets and initiates translation of a subset of mRNAs involved in cell proliferation. The protein is Eukaryotic translation initiation factor 3 subunit M of Chaetomium globosum (strain ATCC 6205 / CBS 148.51 / DSM 1962 / NBRC 6347 / NRRL 1970) (Soil fungus).